A 693-amino-acid chain; its full sequence is Endoprotease bli (693 aa).

The N-terminal stretch at 1–20 (MYWQLVRILVLFDCLQKILA) is a signal peptide. Positions 21–116 (IEHDSICIAD…EQRPRVRRKR (96 aa)) are cleaved as a propeptide — inhibition peptide. D161 provides a ligand contact to Ca(2+). Residues 167 to 482 (QWYLNNGAQG…YGLMDAGALV (316 aa)) enclose the Peptidase S8 domain. The N-linked (GlcNAc...) asparagine glycan is linked to N194. The Charge relay system role is filled by D201. D202 contacts substrate. Residues D210, D222, D227, and D229 each contribute to the Ca(2+) site. Positions 215 to 242 (YDPLASTDINGHDDDPTPQDDGDNKHGT) are disordered. A substrate-binding site is contributed by 237 to 238 (DN). The Charge relay system role is filled by H240. Positions 251, 254, 256, and 258 each coordinate Ca(2+). 2 disulfide bridges follow: C257/C406 and C349/C379. Substrate is bound by residues E282, 299–304 (SWGPED), D310, and 338–341 (ASGN). Position 304 (D304) interacts with Ca(2+). D347 serves as a coordination point for Ca(2+). Residues D352 and Y354 each contribute to the substrate site. Residue E377 participates in Ca(2+) binding. Residue S414 is the Charge relay system of the active site. S414 contacts substrate. N-linked (GlcNAc...) asparagine glycosylation is found at N433 and N518. The P/Homo B domain occupies 490–628 (TVPEQHICTY…SLLLYGTAEP (139 aa)). C497 and C526 are joined by a disulfide. Residues 629 to 693 (AQPNDPRHSS…LVSAQPELRV (65 aa)) form a disordered region. Basic and acidic residues predominate over residues 668-681 (DSRDWQPKKVENKK).

The protein belongs to the peptidase S8 family. Furin subfamily. It depends on Ca(2+) as a cofactor. In terms of processing, N-glycosylated. The inhibition peptide, which plays the role of an intramolecular chaperone, is probably autocatalytically removed in the endoplasmic reticulum (ER) and remains non-covalently bound as a potent autoinhibitor. Probably following transport to the trans Golgi, a second cleavage within the inhibition propeptide results in propeptide dissociation and bli activation.

It is found in the secreted. The catalysed reaction is Release of mature proteins from their proproteins by cleavage of -Arg-Xaa-Yaa-Arg-|-Zaa- bonds, where Xaa can be any amino acid and Yaa is Arg or Lys. Releases albumin, complement component C3 and von Willebrand factor from their respective precursors.. With respect to regulation, inhibited by the propeptide before the second cleavage. Inhibited by ethylenediaminetetraacetic acid (EDTA), ZnSO(4) and chloroketone DEC-RVKR-CMK. Functionally, serine endoprotease which cleaves substrates at the RX(K/R)R consensus motif. The polypeptide is Endoprotease bli (Onchocerca volvulus).